The chain runs to 142 residues: Small heat shock protein IbpB (142 aa).

Residues 26-137 (AGEGQSFPPY…AAQRIAISER (112 aa)) form the sHSP domain.

This sequence belongs to the small heat shock protein (HSP20) family. In terms of assembly, homodimer. Forms homomultimers of about 100-150 subunits at optimal growth temperatures. Conformation changes to oligomers at high temperatures or high ionic concentrations. The decrease in size of the multimers is accompanied by an increase in chaperone activity.

It is found in the cytoplasm. Functionally, associates with aggregated proteins, together with IbpA, to stabilize and protect them from irreversible denaturation and extensive proteolysis during heat shock and oxidative stress. Aggregated proteins bound to the IbpAB complex are more efficiently refolded and reactivated by the ATP-dependent chaperone systems ClpB and DnaK/DnaJ/GrpE. Its activity is ATP-independent. The chain is Small heat shock protein IbpB from Shigella boydii serotype 18 (strain CDC 3083-94 / BS512).